Consider the following 391-residue polypeptide: Phosphoglycerate kinase (391 aa).

Residues 21 to 23 (DLN), R36, 59 to 62 (HRGR), R113, and R146 each bind substrate. Residues K197, E314, and 340–343 (GGDT) contribute to the ATP site.

Belongs to the phosphoglycerate kinase family. As to quaternary structure, monomer.

The protein localises to the cytoplasm. The catalysed reaction is (2R)-3-phosphoglycerate + ATP = (2R)-3-phospho-glyceroyl phosphate + ADP. Its pathway is carbohydrate degradation; glycolysis; pyruvate from D-glyceraldehyde 3-phosphate: step 2/5. In Ruthia magnifica subsp. Calyptogena magnifica, this protein is Phosphoglycerate kinase.